The sequence spans 769 residues: Trehalose 6-phosphate phosphorylase (769 aa).

342-343 serves as a coordination point for substrate; sequence WD. The active-site Proton donor is the glutamate 480. 589-590 contributes to the substrate binding site; that stretch reads KQ.

This sequence belongs to the glycosyl hydrolase 65 family. In terms of assembly, monomer.

The catalysed reaction is alpha,alpha-trehalose 6-phosphate + phosphate = beta-D-glucose 1-phosphate + D-glucose 6-phosphate. Functionally, catalyzes the conversion of trehalose 6-phosphate into glucose 1-phosphate and glucose 6-phosphate. This is Trehalose 6-phosphate phosphorylase (trePP) from Lactococcus lactis subsp. lactis (strain IL1403) (Streptococcus lactis).